The primary structure comprises 1067 residues: Eukaryotic translation initiation factor 3 subunit A (1067 aa).

Positions 92 to 121 (LKKFIELAEKKVTEAQAKADEIQSSLESAA) form a coiled coil. Positions 339-523 (MTKAASFVLL…GVLTFDTDIF (185 aa)) constitute a PCI domain. Positions 608–899 (RVLIEKKKEA…QKQREEEAEA (292 aa)) form a coiled coil. Composition is skewed to basic and acidic residues over residues 617 to 632 (AATD…EETR), 642 to 665 (EAEK…DEQD), 795 to 901 (EVSE…EARR), and 916 to 926 (AEPERPAERTA). 2 disordered regions span residues 617-665 (AATD…DEQD) and 795-1067 (EVSE…QQQQ). 2 stretches are compositionally biased toward low complexity: residues 965 to 976 (AAPAAAPAPAAE) and 1025 to 1046 (SSSS…AASS).

It belongs to the eIF-3 subunit A family. In terms of assembly, component of the eukaryotic translation initiation factor 3 (eIF-3) complex.

The protein resides in the cytoplasm. Its function is as follows. RNA-binding component of the eukaryotic translation initiation factor 3 (eIF-3) complex, which is involved in protein synthesis of a specialized repertoire of mRNAs and, together with other initiation factors, stimulates binding of mRNA and methionyl-tRNAi to the 40S ribosome. The eIF-3 complex specifically targets and initiates translation of a subset of mRNAs involved in cell proliferation. This is Eukaryotic translation initiation factor 3 subunit A (tif32) from Neosartorya fischeri (strain ATCC 1020 / DSM 3700 / CBS 544.65 / FGSC A1164 / JCM 1740 / NRRL 181 / WB 181) (Aspergillus fischerianus).